The sequence spans 431 residues: NADH-quinone oxidoreductase subunit D 2 (431 aa).

The disordered stretch occupies residues methionine 1–alanine 27.

The protein belongs to the complex I 49 kDa subunit family. In terms of assembly, NDH-1 is composed of 14 different subunits. Subunits NuoB, C, D, E, F, and G constitute the peripheral sector of the complex.

It localises to the cell inner membrane. It carries out the reaction a quinone + NADH + 5 H(+)(in) = a quinol + NAD(+) + 4 H(+)(out). In terms of biological role, NDH-1 shuttles electrons from NADH, via FMN and iron-sulfur (Fe-S) centers, to quinones in the respiratory chain. The immediate electron acceptor for the enzyme in this species is believed to be ubiquinone. Couples the redox reaction to proton translocation (for every two electrons transferred, four hydrogen ions are translocated across the cytoplasmic membrane), and thus conserves the redox energy in a proton gradient. The sequence is that of NADH-quinone oxidoreductase subunit D 2 from Anaeromyxobacter sp. (strain Fw109-5).